The chain runs to 1078 residues: Transmembrane protein 132B (1078 aa).

The Extracellular segment spans residues 1-903; the sequence is MFGAASRMDT…LTDLEIGMYA (903 aa). 3 N-linked (GlcNAc...) asparagine glycosylation sites follow: Asn343, Asn366, and Asn381. The segment at 834–887 is disordered; the sequence is RGTPVGQEESTNKSTTPQSPMEGKNKLLKSGGPDAFTSFPTQGKSPDPNNPSDL. A compositionally biased stretch (polar residues) spans 841–852; the sequence is EESTNKSTTPQS. The chain crosses the membrane as a helical span at residues 904 to 924; the sequence is LLCVFCLAILVFLINCVAFAW. At 925 to 1078 the chain is on the cytoplasmic side; the sequence is KYRHKRFAVS…DYMESLQDQM (154 aa).

This sequence belongs to the TMEM132 family.

The protein localises to the membrane. The protein is Transmembrane protein 132B (TMEM132B) of Homo sapiens (Human).